We begin with the raw amino-acid sequence, 526 residues long: Thioredoxin reductase 2, mitochondrial (526 aa).

Residues 1-36 (MAAIVAALRGSSGRFRPQTRVLTRGTRGAAGAASAA) constitute a mitochondrion transit peptide. An FAD-binding site is contributed by 43–72 (DLLVIGGGSGGLACAKEAAQLGRKVAVADY). An N6-succinyllysine modification is found at Lys-81. Cys-88 and Cys-93 are joined by a disulfide. Residues Lys-177 and Lys-331 each carry the N6-succinyllysine modification. The active-site Proton acceptor is the His-499. Residues 524–525 (CU) constitute a cross-link (cysteinyl-selenocysteine (Cys-Sec)). Residue Sec-525 is a non-standard amino acid, selenocysteine.

It belongs to the class-I pyridine nucleotide-disulfide oxidoreductase family. In terms of assembly, homodimer. FAD is required as a cofactor. As to expression, expressed in liver, kidney, adrenal gland and heart.

Its subcellular location is the mitochondrion. It carries out the reaction [thioredoxin]-dithiol + NADP(+) = [thioredoxin]-disulfide + NADPH + H(+). Its function is as follows. Involved in the control of reactive oxygen species levels and the regulation of mitochondrial redox homeostasis. Maintains mitochondrial thioredoxin in a reduced state. May play a role in redox-regulated cell signaling. The polypeptide is Thioredoxin reductase 2, mitochondrial (Txnrd2) (Rattus norvegicus (Rat)).